The sequence spans 525 residues: 2,3-bisphosphoglycerate-independent phosphoglycerate mutase (525 aa).

Asp-15 and Ser-65 together coordinate Mn(2+). Ser-65 serves as the catalytic Phosphoserine intermediate. Residues His-126, 156–157, Arg-188, Arg-194, 258–261, and Lys-331 contribute to the substrate site; these read RD and RPDR. Mn(2+) contacts are provided by Asp-398, His-402, Asp-439, His-440, and His-457.

This sequence belongs to the BPG-independent phosphoglycerate mutase family. As to quaternary structure, monomer. The cofactor is Mn(2+).

It carries out the reaction (2R)-2-phosphoglycerate = (2R)-3-phosphoglycerate. The protein operates within carbohydrate degradation; glycolysis; pyruvate from D-glyceraldehyde 3-phosphate: step 3/5. In terms of biological role, catalyzes the interconversion of 2-phosphoglycerate and 3-phosphoglycerate. In Picosynechococcus sp. (strain ATCC 27264 / PCC 7002 / PR-6) (Agmenellum quadruplicatum), this protein is 2,3-bisphosphoglycerate-independent phosphoglycerate mutase.